Reading from the N-terminus, the 105-residue chain is Small ribosomal subunit protein uS17 (105 aa).

It belongs to the universal ribosomal protein uS17 family. In terms of assembly, part of the 30S ribosomal subunit.

Functionally, one of the primary rRNA binding proteins, it binds specifically to the 5'-end of 16S ribosomal RNA. In Thermus aquaticus, this protein is Small ribosomal subunit protein uS17.